The following is a 728-amino-acid chain: Ophiobolin F synthase oblA (728 aa).

A (7Z)-ophiobola-7,19-dien-3-ol synthase region spans residues 1 to 322 (MEYKYSTIVD…RYHFPGRWNE (322 aa)). Mg(2+) is bound by residues D93 and D97. D93 serves as a coordination point for substrate. The DDXXD 1 motif lies at 93–97 (DDEID). Residues 182-185 (RCMD), N226, 230-234 (SYEKE), and 313-314 (RY) each bind substrate. The short motif at 226–234 (NDLFSYEKE) is the NSE/DTE element. A geranylfarnesyl diphosphate synthase region spans residues 323 to 728 (LQKLRAEHGI…LRLMVDMLKV (406 aa)). Low complexity predominate over residues 362–371 (GINGTNGVNG). A disordered region spans residues 362–394 (GINGTNGVNGKRNRDEDGDENDARINGNGFKKP). Residues K439, R442, and H471 each coordinate isopentenyl diphosphate. The Mg(2+) site is built by D478 and D482. A DDXXD 2 motif is present at residues 478-482 (DDIED). A dimethylallyl diphosphate-binding site is contributed by R487. Residue R488 coordinates isopentenyl diphosphate. Residues K565, T566, Q604, N611, K621, and K631 each coordinate dimethylallyl diphosphate.

In the N-terminal section; belongs to the terpene synthase family. This sequence in the C-terminal section; belongs to the FPP/GGPP synthase family. The cofactor is Mg(2+).

It catalyses the reaction isopentenyl diphosphate + (2E,6E)-farnesyl diphosphate = (2E,6E,10E)-geranylgeranyl diphosphate + diphosphate. It carries out the reaction isopentenyl diphosphate + (2E,6E,10E)-geranylgeranyl diphosphate = (2E,6E,10E,14E)-geranylfarnesyl diphosphate + diphosphate. The enzyme catalyses (2E,6E,10E,14E)-geranylfarnesyl diphosphate + H2O = ophiobolin F + diphosphate. The protein operates within secondary metabolite biosynthesis; terpenoid biosynthesis. Functionally, bifunctional sesterterpene synthase; part of the gene cluster that mediates the biosynthesis of the sesterterpenes ophiobolins, fungal phytotoxins with potential anti-cancer activities. The first step of the pathway is performed by the sesterterpene synthase oblA that possesses both prenyl transferase and terpene cyclase activity, converting isopentenyl diphosphate and dimethylallyl diphosphate into geranylfarnesyl diphosphate (GFPP) and further converting GFPP into ophiobolin F, respectively. Other sesterterpenoids (C(25) terpenoids) are found as minor products of oblA. The cytochrome P450 monooxygenase oblB then catalyzes a four-step oxidative transformation of ophiobolin F to yield ophiobolin C. The function of the cytochrome P450 monooxygenase oblE has still to be determined. This is Ophiobolin F synthase oblA from Emericella variicolor (Aspergillus stellatus).